A 385-amino-acid chain; its full sequence is cAMP-dependent protein kinase, catalytic subunit-like (385 aa).

A Protein kinase domain is found at 63 to 317; sequence LERIVTIGKG…TQDVKDHKWF (255 aa). ATP is bound by residues 69-77 and Lys92; that span reads IGKGTFGRV. The Proton acceptor role is filled by Asp186. The AGC-kinase C-terminal domain maps to 318–385; that stretch reads EKVNWDDTLH…QRERDLFAEW (68 aa).

The protein belongs to the protein kinase superfamily. Ser/Thr protein kinase family. cAMP subfamily.

It catalyses the reaction L-seryl-[protein] + ATP = O-phospho-L-seryl-[protein] + ADP + H(+). It carries out the reaction L-threonyl-[protein] + ATP = O-phospho-L-threonyl-[protein] + ADP + H(+). This Caenorhabditis briggsae protein is cAMP-dependent protein kinase, catalytic subunit-like.